Reading from the N-terminus, the 326-residue chain is Cyclin-dependent kinase 6 (326 aa).

Residue methionine 1 is modified to N-acetylmethionine. Tyrosine 13 and tyrosine 24 each carry phosphotyrosine. The 288-residue stretch at 13-300 (YECVAEIGEG…AYGALNHPYF (288 aa)) folds into the Protein kinase domain. Residues 19–27 (IGEGAYGKV) and lysine 43 contribute to the ATP site. Phosphothreonine is present on residues threonine 49 and threonine 70. Aspartate 145 acts as the Proton acceptor in catalysis. Threonine 177 carries the phosphothreonine modification. Lysine 264 carries the post-translational modification N6-acetyllysine. Serine 319 carries the phosphoserine modification. Threonine 325 carries the post-translational modification Phosphothreonine.

Belongs to the protein kinase superfamily. CMGC Ser/Thr protein kinase family. CDC2/CDKX subfamily. As to quaternary structure, interaction with D-type G1 cyclins. Cyclin binding promotes enzyme activation by phosphorylation at Thr-177. Binds to RUNX1, CDKN2D, FBXO7 and CDKN2C/p18-INK4c. Forms a cytoplasmic complex with Hsp90/HSP90AB1 and CDC37. FBXO7-binding promotes D-type cyclin binding. Post-translationally, thr-177 phosphorylation and Tyr-24 dephosphorylation promotes kinase activity. Expressed in subgranular zone (SGZ) of the hippocampal dentate gyrus (DG) and the subventricular zone (SVZ) of the lateral ventricles whose neural precursor cells (NPC) give rise to dentate granule neurons and olfactory bulb (OB) interneurons, respectively. Expressed in the neuroepithelium of the cerebral cortex of the developing brain.

It localises to the cytoplasm. It is found in the nucleus. The protein resides in the cell projection. Its subcellular location is the ruffle. The protein localises to the cytoskeleton. It localises to the microtubule organizing center. It is found in the centrosome. It carries out the reaction L-seryl-[protein] + ATP = O-phospho-L-seryl-[protein] + ADP + H(+). The catalysed reaction is L-threonyl-[protein] + ATP = O-phospho-L-threonyl-[protein] + ADP + H(+). With respect to regulation, activated by Thr-177 phosphorylation and Tyr-24 dephosphorylation. Rapidly down-regulated prior to cell differentiation (e.g. erythroid and osteoblast). Functionally, serine/threonine-protein kinase involved in the control of the cell cycle and differentiation; promotes G1/S transition. Phosphorylates pRB/RB1 and NPM1. Interacts with D-type G1 cyclins during interphase at G1 to form a pRB/RB1 kinase and controls the entrance into the cell cycle. Involved in initiation and maintenance of cell cycle exit during cell differentiation; prevents cell proliferation and negatively regulates cell differentiation, but is required for the proliferation of specific cell types (e.g. erythroid and hematopoietic cells). Essential for cell proliferation within the dentate gyrus of the hippocampus and the subventricular zone of the lateral ventricles. Required during thymocyte development. Promotes the production of newborn neurons, probably by modulating G1 length. Promotes, at least in astrocytes, changes in patterns of gene expression, changes in the actin cytoskeleton including loss of stress fibers, and enhanced motility during cell differentiation. Prevents myeloid differentiation by interfering with RUNX1 and reducing its transcription transactivation activity, but promotes proliferation of normal myeloid progenitors. Delays senescence. Promotes the proliferation of beta-cells in pancreatic islets of Langerhans. May play a role in the centrosome organization during the cell cycle phases. The chain is Cyclin-dependent kinase 6 (Cdk6) from Mus musculus (Mouse).